The sequence spans 986 residues: Ephrin type-A receptor 4 (986 aa).

Positions 1-19 (MAGIFYFALFSCLFGICDA) are cleaved as a signal peptide. At 20–547 (VTGSRVYPAN…RIIGDGANST (528 aa)) the chain is on the extracellular side. Positions 30–209 (EVTLLDSRSV…FYKKCPLTVR (180 aa)) constitute an Eph LBD domain. N-linked (GlcNAc...) asparagine glycans are attached at residues N235, N340, and N408. 2 Fibronectin type-III domains span residues 328–439 (PPSA…TNQA) and 440–537 (APSS…TVPS). N545 is a glycosylation site (N-linked (GlcNAc...) asparagine). The helical transmembrane segment at 548–569 (VLLVSVSGSVVLVVILIAAFVI) threads the bilayer. At 570–986 (SRRRSKYSKA…QQMHGRMVPV (417 aa)) the chain is on the cytoplasmic side. 2 positions are modified to phosphotyrosine; by autocatalysis: Y596 and Y602. One can recognise a Protein kinase domain in the interval 621–882 (IKIEKVIGVG…QIVNMLDKLI (262 aa)). Residues 627–635 (IGVGEFGEV) and K653 each bind ATP. D746 functions as the Proton acceptor in the catalytic mechanism. Phosphotyrosine; by autocatalysis occurs at positions 779 and 928. The SAM domain occupies 911–975 (SAVVSVGDWL…LSSVQAMRTQ (65 aa)). A PDZ-binding motif is present at residues 984-986 (VPV).

Belongs to the protein kinase superfamily. Tyr protein kinase family. Ephrin receptor subfamily. Heterotetramer upon binding of the ligand. The heterotetramer is composed of an ephrin dimer and a receptor dimer. Oligomerization is probably required to induce biological responses. Interacts (phosphorylated at position Tyr-602) with FYN. Interacts with CDK5, CDK5R1 and NGEF; upon activation by EFNA1 induces NGEF phosphorylation by the kinase CDK5. Interacts with CHN1; effector of EPHA4 in axon guidance linking EPHA4 activation to RAC1 regulation. Interacts (via PDZ motif) with SIPA1L1 (via PDZ domain); controls neuronal morphology through regulation of the RAP1 (RAP1A or RAP1B) and RAP2 (RAP2A, RAP2B or RAP2C) GTPases. Forms a ternary complex composed of ADAM10, CADH1 and EPHA4; within the complex, CADH1 is cleaved by ADAM10 which disrupts adherens junctions. Ubiquitous.

It localises to the cell membrane. The protein localises to the cell projection. Its subcellular location is the axon. The protein resides in the dendrite. It is found in the postsynaptic density membrane. It localises to the early endosome. The protein localises to the cell junction. Its subcellular location is the adherens junction. The enzyme catalyses L-tyrosyl-[protein] + ATP = O-phospho-L-tyrosyl-[protein] + ADP + H(+). In terms of biological role, receptor tyrosine kinase which binds membrane-bound ephrin family ligands residing on adjacent cells, leading to contact-dependent bidirectional signaling into neighboring cells. The signaling pathway downstream of the receptor is referred to as forward signaling while the signaling pathway downstream of the ephrin ligand is referred to as reverse signaling. Highly promiscuous, it has the unique property among Eph receptors to bind and to be physiologically activated by both GPI-anchored ephrin-A and transmembrane ephrin-B ligands including EFNA1 and EFNB3. Upon activation by ephrin ligands, modulates cell morphology and integrin-dependent cell adhesion through regulation of the Rac, Rap and Rho GTPases activity. Plays an important role in the development of the nervous system controlling different steps of axonal guidance including the establishment of the corticospinal projections. May also control the segregation of motor and sensory axons during neuromuscular circuit development. In addition to its role in axonal guidance plays a role in synaptic plasticity. Activated by EFNA1 phosphorylates CDK5 at 'Tyr-15' which in turn phosphorylates NGEF regulating RHOA and dendritic spine morphogenesis. In the nervous system, also plays a role in repair after injury preventing axonal regeneration and in angiogenesis playing a role in central nervous system vascular formation. Additionally, its promiscuity makes it available to participate in a variety of cell-cell signaling regulating for instance the development of the thymic epithelium. During development of the cochlear organ of Corti, regulates pillar cell separation by forming a ternary complex with ADAM10 and CADH1 which facilitates the cleavage of CADH1 by ADAM10 and disruption of adherens junctions. Phosphorylates CAPRIN1, promoting CAPRIN1-dependent formation of a membraneless compartment. In Homo sapiens (Human), this protein is Ephrin type-A receptor 4 (EPHA4).